Here is a 511-residue protein sequence, read N- to C-terminus: MLILGTSLANQVHASWQTYIMIIIYFTILLFIGYYGYKQATGNLSEFMLGGRSIGPYVTALSAGASDMSGWMIMGLPGSVYSTGLSAMWITIGLSLGAYVNYFVVAPRLRVYTELAGDAITLPDFFKNRLNDHNNYIKIISGLIIVVFFTLYTHSGFVSGGKLFESAFGLNYHWGLLMVAFIVIFYTFFGGYLAVSITDFFQGVIMLIAMVMVPIVALIDLNGIDTFKQVAEMKPTNMNLFKGTTVLGIISLFAWGLGYFGQPHIIVRFMSIKSHKLLPKARRLGISWMVIGLLGAVAVGLTGIAFISERNIKLEDPETLFIVMSQILFHPLVGGFLLAAILAAIMSTISSQLLVTSSSLTEDFYKLIRGEDKAKAHEKEFLMVGRLSVLIVAIVAIWIAWSPNDTILNLVGNAWAGFGAAFSPLVIFSLYWKGLSRTGALAGMITGALVVIIWIVWIKPLASINELFGMYEIIPGFLASVITTYFVSKYTKKPGSFVTHDLDKVKQIVKE.

The next 13 helical transmembrane spans lie at 16-36, 54-74, 85-105, 139-159, 175-195, 204-224, 246-266, 286-306, 327-347, 381-401, 410-430, 438-458, and 467-487; these read WQTYIMIIIYFTILLFIGYYG, IGPYVTALSAGASDMSGWMIM, LSAMWITIGLSLGAYVNYFVV, IISGLIIVVFFTLYTHSGFVS, GLLMVAFIVIFYTFFGGYLAV, VIMLIAMVMVPIVALIDLNGI, VLGIISLFAWGLGYFGQPHII, ISWMVIGLLGAVAVGLTGIAF, ILFHPLVGGFLLAAILAAIMS, FLMVGRLSVLIVAIVAIWIAW, LVGNAWAGFGAAFSPLVIFSL, TGALAGMITGALVVIIWIVWI, and LFGMYEIIPGFLASVITTYFV.

This sequence belongs to the sodium:solute symporter (SSF) (TC 2.A.21) family.

The protein resides in the cell membrane. It catalyses the reaction L-proline(in) + Na(+)(in) = L-proline(out) + Na(+)(out). Functionally, catalyzes the sodium-dependent uptake of extracellular L-proline. This is Sodium/proline symporter 2 (putP2) from Staphylococcus saprophyticus subsp. saprophyticus (strain ATCC 15305 / DSM 20229 / NCIMB 8711 / NCTC 7292 / S-41).